A 406-amino-acid chain; its full sequence is Succinylornithine transaminase (406 aa).

Position 252 is an N6-(pyridoxal phosphate)lysine (K252).

It belongs to the class-III pyridoxal-phosphate-dependent aminotransferase family. AstC subfamily. Pyridoxal 5'-phosphate is required as a cofactor.

It carries out the reaction N(2)-succinyl-L-ornithine + 2-oxoglutarate = N-succinyl-L-glutamate 5-semialdehyde + L-glutamate. The protein operates within amino-acid degradation; L-arginine degradation via AST pathway; L-glutamate and succinate from L-arginine: step 3/5. Its function is as follows. Catalyzes the transamination of N(2)-succinylornithine and alpha-ketoglutarate into N(2)-succinylglutamate semialdehyde and glutamate. Can also act as an acetylornithine aminotransferase. This chain is Succinylornithine transaminase, found in Escherichia coli O45:K1 (strain S88 / ExPEC).